The following is a 1396-amino-acid chain: Major capsid protein (1396 aa).

Belongs to the herpesviridae major capsid protein family. In terms of assembly, homomultimer. Makes the hexons and eleven out of twelve pentons. Interacts with triplex proteins 1/TRX1 and 2/TRX2; adjacent capsomers are linked together in groups of three by triplexes, heterotrimeric complexes composed of one molecule of TRX1 and two molecules of TRX2. Interacts with scaffold protein; this interaction allows efficient MCP transport to the host nucleus. Interacts with capsid vertex component 2/CVC2. Interacts with the small capsomere-interacting protein/SCP.

The protein resides in the virion. The protein localises to the host nucleus. In terms of biological role, self-assembles to form an icosahedral capsid with a T=16 symmetry, about 200 nm in diameter, and consisting of 150 hexons and 12 pentons (total of 162 capsomers). Hexons form the edges and faces of the capsid and are each composed of six MCP molecules. In contrast, one penton is found at each of the 12 vertices. Eleven of the pentons are MCP pentamers, while the last vertex is occupied by the portal complex. The capsid is surrounded by a layer of proteinaceous material designated the tegument which, in turn, is enclosed in an envelope of host cell-derived lipids containing virus-encoded glycoproteins. The sequence is that of Major capsid protein from Varicella-zoster virus (strain Dumas) (HHV-3).